Consider the following 177-residue polypeptide: Adenine phosphoribosyltransferase (177 aa).

It belongs to the purine/pyrimidine phosphoribosyltransferase family. As to quaternary structure, homodimer.

It localises to the cytoplasm. The catalysed reaction is AMP + diphosphate = 5-phospho-alpha-D-ribose 1-diphosphate + adenine. Its pathway is purine metabolism; AMP biosynthesis via salvage pathway; AMP from adenine: step 1/1. Functionally, catalyzes a salvage reaction resulting in the formation of AMP, that is energically less costly than de novo synthesis. This Prosthecochloris aestuarii (strain DSM 271 / SK 413) protein is Adenine phosphoribosyltransferase.